Here is a 737-residue protein sequence, read N- to C-terminus: Palmitoyltransferase AKR1 (737 aa).

Residues 1 to 47 (MKQIDSEDSITVPNDTPEDNSASSMQPVMSNLSIEEHQSENEPIEQE) form a disordered region. The Cytoplasmic segment spans residues 1-304 (MKQIDSEDSI…VYFKKSLHTK (304 aa)). Residues 9–33 (SITVPNDTPEDNSASSMQPVMSNLS) show a composition bias toward polar residues. ANK repeat units lie at residues 54 to 84 (PLLSKYHLACQQGDLATVKEIIENGVIDLKH), 90 to 119 (ERVSGLHWASINNRLSVVRYLISKDVDVNF), 124 to 153 (LNATPLHWAARYGYVYIVDYLLEHGADPSV), 157 to 190 (QGFNLLHLSINSSNIMLVIYVLFFVIDDKLDIDC), 194 to 223 (NGRTALLWAAYQGDSLSVETLLKFRASVKA), and 227 to 256 (GGFTPLHWGTVKGQAQVLKHLIENGADFFQ). Helical transmembrane passes span 305–325 (LVTFFAPWIFIGVLFKCFASI) and 326–346 (HPIFSLIFSILLGLGMRYTLK). Over 347–364 (KYVIPAYAQRNTRQSFLK) the chain is Cytoplasmic. A helical membrane pass occupies residues 365-385 (TPFLAGVFSGSVFWASYTWLT). At 386-396 (RIMPLTLIEEP) the chain is on the lumenal side. Residues 397 to 417 (ITNLLFFAGVVLLASLFVKLV) form a helical membrane-spanning segment. Residues 418–493 (RSDPGLIPEE…YNDIGLRNHK (76 aa)) are Cytoplasmic-facing. In terms of domain architecture, DHHC spans 450–500 (HFCISTWVRKPIRSKFSNFSRALVTRFDHFCPWIYNDIGLRNHKTFLFFIL). Cys480 (S-palmitoyl cysteine intermediate) is an active-site residue. A helical membrane pass occupies residues 494–514 (TFLFFILCLETCIFVFLKLCM). Topologically, residues 515-547 (EYFDVLEDTFEDDYDLNCGIFGEDLCAGFFFDT) are lumenal. Residues 548–568 (FTFLVLAWTCFQGIWVGFLTF) traverse the membrane as a helical segment. The Cytoplasmic portion of the chain corresponds to 569–737 (VQLFQTAKGV…ERHYLAEEIV (169 aa)).

Belongs to the DHHC palmitoyltransferase family. AKR/ZDHHC17 subfamily.

The protein localises to the early endosome membrane. It is found in the golgi apparatus membrane. The enzyme catalyses L-cysteinyl-[protein] + hexadecanoyl-CoA = S-hexadecanoyl-L-cysteinyl-[protein] + CoA. Functionally, palmitoyltransferase specific for casein kinase 1. This Lachancea kluyveri (strain ATCC 58438 / CBS 3082 / BCRC 21498 / NBRC 1685 / JCM 7257 / NCYC 543 / NRRL Y-12651) (Yeast) protein is Palmitoyltransferase AKR1 (AKR1).